Reading from the N-terminus, the 146-residue chain is Hemoglobin subunit beta (146 aa).

The region spanning 2–146 (HWSAEEKQLI…VAHALARKYH (145 aa)) is the Globin domain. Heme b contacts are provided by H63 and H92.

This sequence belongs to the globin family. Heterotetramer of two alpha chains and two beta chains. Red blood cells.

Functionally, involved in oxygen transport from the lung to the various peripheral tissues. The polypeptide is Hemoglobin subunit beta (HBB) (Phasianus colchicus colchicus (Black-necked pheasant)).